The primary structure comprises 801 residues: Na(+)/H(+) antiporter subunit A1 (801 aa).

21 consecutive transmembrane segments (helical) span residues 4–25 (LHIAVILPLIFALIIPILYRFF), 30–49 (LGWFVLPVPIVIFIYMLTLI), 79–101 (LGLLFSLLISGIGSLVVLYSIGY), 108–127 (LGNFYCYLLLFMGAMLGVVL), 131–153 (VIILYLFWELTSFSSFLLISFWR), 166–188 (LIITVFGGLSLLGGIILLAIPTQ), 208–230 (FIFAMILIMIGAFTKSAQFPFYI), 243–265 (SAYLHSATMVKAGLYLIARMTPI), 270–289 (QGWIWTVTLVGLITLFWASL), 302–324 (AFSTVSQLGMIMAMLGIGAISYH), 339–361 (AAIFHLINHATFKGALFMITGAV), 373–395 (LGGLLTIMPISFTITVITALSMA), 429–451 (YLFPIIGIVGSVFTFVYSIKFIM), 472–494 (ILMLLSPAILATLVIVFGLFPGI), 526–548 (AFLSTLVIYILGILLIVTFSYWV), 589–611 (NNLVIIFGALILLTFVTVFSVPF), 621–641 (IRIFEVCIVILLLSAAFLILF), 646–668 (LFSIIMLSAVGYAVSVLFIFFKA), 672–694 (ALTQFVVESISTALFLLCFYHLP), 707–729 (LTNALIAGGVGLSVIIIGLIAYG), and 767–784 (LFESSVLGIAGLAVYTMI).

The protein belongs to the CPA3 antiporters (TC 2.A.63) subunit A family. In terms of assembly, may form a heterooligomeric complex that consists of seven subunits: mnhA1, mnhB1, mnhC1, mnhD1, mnhE1, mnhF1 and mnhG1.

Its subcellular location is the cell membrane. With respect to regulation, na(+) extrusion is completely inhibited by the H(+) conductor carbonyl cyanide m-chlorophenylhydrazone (CCCP). In terms of biological role, mnh complex is a Na(+)/H(+) antiporter involved in Na(+) excretion. The chain is Na(+)/H(+) antiporter subunit A1 (mnhA1) from Staphylococcus aureus (strain MRSA252).